The following is a 707-amino-acid chain: D-(-)-3-hydroxybutyrate oligomer hydrolase (707 aa).

Residues 1-24 (MHHDNFRRLGNAAFAAAAALLAVA) form the signal peptide. Ser311 (charge relay system) is an active-site residue.

The protein belongs to the D-(-)-3-hydroxybutyrate oligomer hydrolase family.

It is found in the secreted. It catalyses the reaction (3R)-hydroxybutanoate dimer + H2O = 2 (R)-3-hydroxybutanoate + H(+). The protein operates within lipid metabolism; butanoate metabolism. Its function is as follows. Participates in the degradation of poly-3-hydroxybutyrate (PHB). It works downstream of poly(3-hydroxybutyrate) depolymerase, hydrolyzing D(-)-3-hydroxybutyrate oligomers of various length (3HB-oligomers) into 3HB-monomers. In Cupriavidus pinatubonensis (strain JMP 134 / LMG 1197) (Cupriavidus necator (strain JMP 134)), this protein is D-(-)-3-hydroxybutyrate oligomer hydrolase.